The following is a 422-amino-acid chain: Beta-1,3-galactosyltransferase 2 (422 aa).

Residues 1 to 20 (MLQWRRRHCCFAKMTWSPKR) are Cytoplasmic-facing. The chain crosses the membrane as a helical; Signal-anchor for type II membrane protein span at residues 21 to 43 (SLLRTPLTGVLSLVFLFAMFLFF). At 44 to 422 (NHHDWLPGRP…AGRYRHRKLH (379 aa)) the chain is on the lumenal side. Asn75, Asn98, Asn119, Asn176, and Asn226 each carry an N-linked (GlcNAc...) asparagine glycan. Residues 91-110 (LRPHTASNSSNTELSPQGVT) form a disordered region. The span at 95–110 (TASNSSNTELSPQGVT) shows a compositional bias: polar residues.

It belongs to the glycosyltransferase 31 family. Mn(2+) is required as a cofactor. Detected in brain and heart.

The protein localises to the golgi apparatus membrane. The catalysed reaction is an N-acetyl-beta-D-glucosaminyl derivative + UDP-alpha-D-galactose = a beta-D-galactosyl-(1-&gt;3)-N-acetyl-beta-D-glucosaminyl derivative + UDP + H(+). It carries out the reaction a beta-D-GlcNAc-(1-&gt;3)-beta-D-Gal-(1-&gt;4)-beta-D-Glc-(1&lt;-&gt;1)-Cer(d18:1(4E)) + UDP-alpha-D-galactose = a beta-D-Gal-(1-&gt;3)-beta-D-GlcNAc-(1-&gt;3)-beta-D-Gal-(1-&gt;4)-beta-D-Glc-(1&lt;-&gt;1')-Cer(d18:1(4E)) + UDP + H(+). The enzyme catalyses a neolactoside IV(3)-beta-GlcNAc-nLc4Cer(d18:1(4E)) + UDP-alpha-D-galactose = a neolactoside IV(3)-beta-[Gal-beta-(1-&gt;3)-GlcNAc]-nLc4Cer(d18:1(4E)) + UDP + H(+). Its pathway is protein modification; protein glycosylation. Its function is as follows. Beta-1,3-galactosyltransferase that transfers galactose from UDP-galactose to substrates with a terminal beta-N-acetylglucosamine (beta-GlcNAc) residue. Can also utilize substrates with a terminal galactose residue, albeit with lower efficiency. Involved in the biosynthesis of the carbohydrate moieties of glycolipids and glycoproteins. This Mus musculus (Mouse) protein is Beta-1,3-galactosyltransferase 2.